The sequence spans 409 residues: Proteasome-activating nucleotidase (409 aa).

The disordered stretch occupies residues M1–D22. Residues V23–S58 are a coiled coil. ATP-binding positions include G183–L188 and H322.

The protein belongs to the AAA ATPase family. As to quaternary structure, homohexamer. The hexameric complex has a two-ring architecture resembling a top hat that caps the 20S proteasome core at one or both ends. Upon ATP-binding, the C-terminus of PAN interacts with the alpha-rings of the proteasome core by binding to the intersubunit pockets.

Its subcellular location is the cytoplasm. ATPase which is responsible for recognizing, binding, unfolding and translocation of substrate proteins into the archaeal 20S proteasome core particle. Is essential for opening the gate of the 20S proteasome via an interaction with its C-terminus, thereby allowing substrate entry and access to the site of proteolysis. Thus, the C-termini of the proteasomal ATPase function like a 'key in a lock' to induce gate opening and therefore regulate proteolysis. Unfolding activity requires energy from ATP hydrolysis, whereas ATP binding alone promotes ATPase-20S proteasome association which triggers gate opening, and supports translocation of unfolded substrates. The protein is Proteasome-activating nucleotidase of Aeropyrum pernix (strain ATCC 700893 / DSM 11879 / JCM 9820 / NBRC 100138 / K1).